A 1244-amino-acid chain; its full sequence is Ras-specific guanine nucleotide-releasing factor 2 (1244 aa).

A PH 1 domain is found at 22 to 129; that stretch reads EGTKRGYLSK…WVEAIQQASY (108 aa). Positions 147-189 form a coiled coil; the sequence is VQIVETEKVAANQLRTQLEDQDTEIERLKAEIIALNKTKERMR. The 30-residue stretch at 201–230 folds into the IQ domain; that stretch reads DIKKIKKVQSFMRGWLCRRKWKIIVQDYIC. Residues 239–425 enclose the DH domain; that stretch reads KRNQIVFNMV…EELSRVMHDE (187 aa). One can recognise a PH 2 domain in the interval 466–584; that stretch reads PSVERGKLSK…WTSDISQCID (119 aa). In terms of domain architecture, N-terminal Ras-GEF spans 631 to 745; that stretch reads KVPQIRYASV…PVRTRKLSLN (115 aa). 3 disordered regions span residues 704–743, 759–814, and 843–879; these read NRSGDHVNDKSPRLCRKFSSPPPLSISSRTSSPVRTRKLS, TTSS…NAEV, and PESPQASEPGEISPCRSPSTPRHLRYRQSGVQTAENS. Positions 706 to 715 are enriched in basic and acidic residues; it reads SGDHVNDKSP. A compositionally biased stretch (polar residues) spans 728–743; that stretch reads SISSRTSSPVRTRKLS. 2 stretches are compositionally biased toward low complexity: residues 759 to 774 and 781 to 806; these read TTSSSAASSPTSANPT and NNNNNSKPPLDLSRGQSPSSPEQSPG. A Ras-GEF domain is found at 1009–1241; the sequence is SAMEIAEQIT…YDLSLKIEPR (233 aa).

Its subcellular location is the cytoplasm. The protein localises to the cell membrane. It is found in the endoplasmic reticulum membrane. Functions as a calcium-regulated nucleotide exchange factor activating both Ras and rac1 through the exchange of bound GDP for GTP. May function in synaptic plasticity. This is Ras-specific guanine nucleotide-releasing factor 2 (rasgrf2) from Danio rerio (Zebrafish).